We begin with the raw amino-acid sequence, 379 residues long: Tryptophan 2,3-dioxygenase (379 aa).

Substrate contacts are provided by residues 57-61 (FIITH) and arginine 128. Histidine 312 serves as a coordination point for heme. Threonine 327 is a substrate binding site.

This sequence belongs to the tryptophan 2,3-dioxygenase family. As to quaternary structure, homotetramer. Dimer of dimers. Heme is required as a cofactor.

It carries out the reaction L-tryptophan + O2 = N-formyl-L-kynurenine. It functions in the pathway amino-acid degradation; L-tryptophan degradation via kynurenine pathway; L-kynurenine from L-tryptophan: step 1/2. Its pathway is pigment biosynthesis; ommochrome biosynthesis. Functionally, heme-dependent dioxygenase that catalyzes the oxidative cleavage of the L-tryptophan (L-Trp) pyrrole ring and converts L-tryptophan to N-formyl-L-kynurenine. Catalyzes the oxidative cleavage of the indole moiety. This chain is Tryptophan 2,3-dioxygenase, found in Drosophila sechellia (Fruit fly).